Here is a 180-residue protein sequence, read N- to C-terminus: Iron sulfur cluster assembly protein 1, mitochondrial (180 aa).

Belongs to the NifU family. As to quaternary structure, component of the core Fe-S cluster (ISC) assembly machinery. The cofactor is [2Fe-2S] cluster.

Its subcellular location is the mitochondrion matrix. The protein operates within cofactor biosynthesis; iron-sulfur cluster biosynthesis. Its function is as follows. Scaffold protein for the de novo synthesis of iron-sulfur (Fe-S) clusters within mitochondria, which is required for maturation of both mitochondrial and cytoplasmic [2Fe-2S] and [4Fe-4S] proteins. First, a [2Fe-2S] cluster is transiently assembled on the scaffold protein ISU1. In a second step, the cluster is released from ISU1, transferred to a glutaredoxin, followed by the formation of mitochondrial [2Fe-2S] proteins, the synthesis of [4Fe-4S] clusters and their target-specific insertion into the recipient apoproteins. Cluster assembly on ISU1 depends on the function of the cysteine desulfurase complex NFS1-ISD11, which serves as the sulfur donor for cluster synthesis, the iron-binding protein frataxin as the putative iron donor, and the electron transfer chain comprised of ferredoxin reductase and ferredoxin, which receive their electrons from NADH. This Kluyveromyces lactis (strain ATCC 8585 / CBS 2359 / DSM 70799 / NBRC 1267 / NRRL Y-1140 / WM37) (Yeast) protein is Iron sulfur cluster assembly protein 1, mitochondrial (ISU1).